Reading from the N-terminus, the 605-residue chain is Aspartate--tRNA(Asp/Asn) ligase (605 aa).

Residue Glu172 participates in L-aspartate binding. Positions 196-199 (QLFK) are aspartate. Arg218 is an L-aspartate binding site. Residues 218–220 (RDE) and Gln227 each bind ATP. His455 is a binding site for L-aspartate. Glu489 provides a ligand contact to ATP. Residue Arg496 participates in L-aspartate binding. 541 to 544 (GLDR) contributes to the ATP binding site.

It belongs to the class-II aminoacyl-tRNA synthetase family. Type 1 subfamily. Homodimer.

Its subcellular location is the cytoplasm. The enzyme catalyses tRNA(Asx) + L-aspartate + ATP = L-aspartyl-tRNA(Asx) + AMP + diphosphate. In terms of biological role, aspartyl-tRNA synthetase with relaxed tRNA specificity since it is able to aspartylate not only its cognate tRNA(Asp) but also tRNA(Asn). Reaction proceeds in two steps: L-aspartate is first activated by ATP to form Asp-AMP and then transferred to the acceptor end of tRNA(Asp/Asn). The chain is Aspartate--tRNA(Asp/Asn) ligase from Ralstonia nicotianae (strain ATCC BAA-1114 / GMI1000) (Ralstonia solanacearum).